The sequence spans 367 residues: Peptide chain release factor 2 (367 aa).

Q254 is subject to N5-methylglutamine.

Belongs to the prokaryotic/mitochondrial release factor family. Post-translationally, methylated by PrmC. Methylation increases the termination efficiency of RF2.

It localises to the cytoplasm. Its function is as follows. Peptide chain release factor 2 directs the termination of translation in response to the peptide chain termination codons UGA and UAA. This is Peptide chain release factor 2 from Acidovorax ebreus (strain TPSY) (Diaphorobacter sp. (strain TPSY)).